The chain runs to 458 residues: Na(+)/H(+) antiporter NhaA (458 aa).

12 helical membrane-spanning segments follow: residues 27–47 (FLHV…AALI), 78–98 (LHFW…GMEI), 114–134 (ILPI…YLSF), 143–163 (GWAV…ALLG), 172–192 (VILL…IAFF), 201–221 (GLAI…IGLA), 222–242 (SAWL…ITGV), 249–269 (VILG…PLTI), 316–336 (PWVA…VSFA), 346–366 (FLVV…GIIT), 388–408 (ILLI…VSML), and 421–441 (IGVL…GLIY).

This sequence belongs to the NhaA Na(+)/H(+) (TC 2.A.33) antiporter family.

The protein resides in the cell inner membrane. It catalyses the reaction Na(+)(in) + 2 H(+)(out) = Na(+)(out) + 2 H(+)(in). In terms of biological role, na(+)/H(+) antiporter that extrudes sodium in exchange for external protons. The polypeptide is Na(+)/H(+) antiporter NhaA (Bartonella quintana (strain Toulouse) (Rochalimaea quintana)).